Reading from the N-terminus, the 373-residue chain is Chaperone protein DnaJ (373 aa).

The J domain maps to 4-68 (NYYQILGVSK…QKRAAYDRLG (65 aa)). Residues 136 to 214 (GIEKNISFSS…CHGMGRYHKQ (79 aa)) form a CR-type zinc finger. Zn(2+)-binding residues include cysteine 149, cysteine 152, cysteine 166, cysteine 169, cysteine 188, cysteine 191, cysteine 202, and cysteine 205. CXXCXGXG motif repeat units lie at residues 149–156 (CDTCHGSG), 166–173 (CDACSGVG), 188–195 (CHKCQGNG), and 202–209 (CKKCHGMG).

The protein belongs to the DnaJ family. In terms of assembly, homodimer. The cofactor is Zn(2+).

It localises to the cytoplasm. Its function is as follows. Participates actively in the response to hyperosmotic and heat shock by preventing the aggregation of stress-denatured proteins and by disaggregating proteins, also in an autonomous, DnaK-independent fashion. Unfolded proteins bind initially to DnaJ; upon interaction with the DnaJ-bound protein, DnaK hydrolyzes its bound ATP, resulting in the formation of a stable complex. GrpE releases ADP from DnaK; ATP binding to DnaK triggers the release of the substrate protein, thus completing the reaction cycle. Several rounds of ATP-dependent interactions between DnaJ, DnaK and GrpE are required for fully efficient folding. Also involved, together with DnaK and GrpE, in the DNA replication of plasmids through activation of initiation proteins. This chain is Chaperone protein DnaJ, found in Rickettsia africae (strain ESF-5).